Reading from the N-terminus, the 668-residue chain is Small ribosomal subunit protein mS81 (rPPR8) (668 aa).

Residues Met1 to Phe36 constitute a mitochondrion transit peptide. PPR repeat units follow at residues Asp286–Val320, Glu321–Ser355, Thr396–Pro430, Ser431–Leu465, Asp466–Asn496, Ala502–Pro537, and Lys543–Pro577.

The protein belongs to the PPR family. P subfamily. Component of the mitochondrial ribosome small subunit.

Its subcellular location is the mitochondrion. The chain is Small ribosomal subunit protein mS81 (rPPR8) from Arabidopsis thaliana (Mouse-ear cress).